The primary structure comprises 1509 residues: Dynein axonemal assembly factor 1 homolog (1509 aa).

LRR repeat units lie at residues 34-56 (RLND…EEYT), 57-78 (ELKC…EKLS), 79-100 (KLKC…EPCR), 101-122 (ELDT…GTNI), 125-146 (VLNT…SDLV), and 150-171 (TLSV…KIFE). The LRRCT domain occupies 185–223 (PVVSRLPQYRKTLILACKELTYLDSRPVFPRDRACAEAW). 4 disordered regions span residues 252–280 (CTIR…DDTC), 306–327 (HPTS…ATSS), 962–1008 (SGDL…DSKN), and 1103–1122 (TLQT…KLRN). Low complexity predominate over residues 309–318 (SESGASTSSS). Positions 978-990 (SESEDYDTADDEY) are enriched in acidic residues. Positions 1103–1112 (TLQTSFSTVG) are enriched in polar residues.

Belongs to the DNAAF1 family.

It is found in the cell projection. The protein resides in the cilium. Functionally, cilium-specific protein required for cilia structures. In Drosophila yakuba (Fruit fly), this protein is Dynein axonemal assembly factor 1 homolog (dtr).